We begin with the raw amino-acid sequence, 528 residues long: GMP synthase [glutamine-hydrolyzing] (528 aa).

Residues 13-204 (AIVILDFGSQ…VYHICGCEPD (192 aa)) enclose the Glutamine amidotransferase type-1 domain. Cys90 functions as the Nucleophile in the catalytic mechanism. Catalysis depends on residues His178 and Glu180. Positions 205–403 (WTTTAFIEEA…LGLPEEIVRR (199 aa)) constitute a GMPS ATP-PPase domain. 232–238 (SGGVDSS) lines the ATP pocket.

In terms of assembly, homodimer.

It carries out the reaction XMP + L-glutamine + ATP + H2O = GMP + L-glutamate + AMP + diphosphate + 2 H(+). It functions in the pathway purine metabolism; GMP biosynthesis; GMP from XMP (L-Gln route): step 1/1. Functionally, catalyzes the synthesis of GMP from XMP. This is GMP synthase [glutamine-hydrolyzing] from Prochlorococcus marinus (strain MIT 9303).